Reading from the N-terminus, the 139-residue chain is ATP synthase epsilon chain (139 aa).

It belongs to the ATPase epsilon chain family. As to quaternary structure, F-type ATPases have 2 components, CF(1) - the catalytic core - and CF(0) - the membrane proton channel. CF(1) has five subunits: alpha(3), beta(3), gamma(1), delta(1), epsilon(1). CF(0) has three main subunits: a, b and c.

Its subcellular location is the cell membrane. Produces ATP from ADP in the presence of a proton gradient across the membrane. This chain is ATP synthase epsilon chain, found in Levilactobacillus brevis (strain ATCC 367 / BCRC 12310 / CIP 105137 / JCM 1170 / LMG 11437 / NCIMB 947 / NCTC 947) (Lactobacillus brevis).